The chain runs to 375 residues: Succinyl-diaminopimelate desuccinylase (375 aa).

Residue H66 coordinates Zn(2+). Residue D68 is part of the active site. D99 lines the Zn(2+) pocket. E133 acts as the Proton acceptor in catalysis. Zn(2+)-binding residues include E134, E162, and H348.

It belongs to the peptidase M20A family. DapE subfamily. In terms of assembly, homodimer. It depends on Zn(2+) as a cofactor. The cofactor is Co(2+).

It carries out the reaction N-succinyl-(2S,6S)-2,6-diaminopimelate + H2O = (2S,6S)-2,6-diaminopimelate + succinate. Its pathway is amino-acid biosynthesis; L-lysine biosynthesis via DAP pathway; LL-2,6-diaminopimelate from (S)-tetrahydrodipicolinate (succinylase route): step 3/3. Its function is as follows. Catalyzes the hydrolysis of N-succinyl-L,L-diaminopimelic acid (SDAP), forming succinate and LL-2,6-diaminopimelate (DAP), an intermediate involved in the bacterial biosynthesis of lysine and meso-diaminopimelic acid, an essential component of bacterial cell walls. The chain is Succinyl-diaminopimelate desuccinylase from Yersinia pseudotuberculosis serotype O:1b (strain IP 31758).